Here is a 102-residue protein sequence, read N- to C-terminus: Small ribosomal subunit protein uS10 (102 aa).

The protein belongs to the universal ribosomal protein uS10 family. Part of the 30S ribosomal subunit.

Functionally, involved in the binding of tRNA to the ribosomes. The chain is Small ribosomal subunit protein uS10 from Streptococcus equi subsp. zooepidemicus (strain MGCS10565).